The primary structure comprises 430 residues: Glutamate-1-semialdehyde 2,1-aminomutase (430 aa).

Lys267 bears the N6-(pyridoxal phosphate)lysine mark.

Belongs to the class-III pyridoxal-phosphate-dependent aminotransferase family. HemL subfamily. Homodimer. Requires pyridoxal 5'-phosphate as cofactor.

Its subcellular location is the cytoplasm. It catalyses the reaction (S)-4-amino-5-oxopentanoate = 5-aminolevulinate. The protein operates within porphyrin-containing compound metabolism; protoporphyrin-IX biosynthesis; 5-aminolevulinate from L-glutamyl-tRNA(Glu): step 2/2. This chain is Glutamate-1-semialdehyde 2,1-aminomutase, found in Cytophaga hutchinsonii (strain ATCC 33406 / DSM 1761 / CIP 103989 / NBRC 15051 / NCIMB 9469 / D465).